The chain runs to 2410 residues: Reducing polyketide synthase FUB1 (2410 aa).

Residues 1–42 (MTLSNGSNGANGTSNGNGAHPSANGFHNAANGGANNGSANGG) show a composition bias toward low complexity. Residues 1–52 (MTLSNGSNGANGTSNGNGAHPSANGFHNAANGGANNGSANGGAEHDAGRPQV) are disordered. Positions 57–479 (SSAIAVIGVS…GANAHAVLDD (423 aa)) constitute a Ketosynthase family 3 (KS3) domain. Catalysis depends on for beta-ketoacyl synthase activity residues cysteine 230, histidine 365, and histidine 403. Positions 608 to 929 (TFIFTGQGAQ…FSAIKRKQDA (322 aa)) are malonyl-CoA:ACP transacylase (MAT) domain. Catalysis depends on serine 699, which acts as the For malonyltransferase activity. Residues 994–1127 (LELLGVRDPR…GLVSTSYKHD (134 aa)) are N-terminal hotdog fold. Positions 994-1307 (LELLGVRDPR…TVPLRGASDS (314 aa)) constitute a PKS/mFAS DH domain. The dehydratase (DH) domain stretch occupies residues 995–1302 (ELLGVRDPRS…LKGCKTVPLR (308 aa)). Residue histidine 1026 is the Proton acceptor; for dehydratase activity of the active site. Residues 1155–1307 (LPSVDPTVFY…TVPLRGASDS (153 aa)) form a C-terminal hotdog fold region. The active-site Proton donor; for dehydratase activity is the aspartate 1220. Positions 1714 to 2026 (GLLDTLEYLS…SGGHVGKIVL (313 aa)) are enoyl reductase (ER) domain. A ketoreductase (KR) domain region spans residues 2050-2226 (ATYVLIGGLG…AATSINLSLV (177 aa)). Residues 2329 to 2406 (EVYEIVLQQL…GFTKKVMAKS (78 aa)) form the Carrier domain. Serine 2366 is modified (O-(pantetheine 4'-phosphoryl)serine).

The protein operates within mycotoxin biosynthesis. Functionally, reducing polyketide synthase; part of the gene cluster that mediates the biosynthesis of fusaric acid, a mycotoxin with low to moderate toxicity to animals and humans, but with high phytotoxic properties. L-aspartate is suggested as fusaric acid amino acid precursor that is activated and further processed to O-acetyl-L-homoserine by cluster enzymes aspartate kinase FUB3 and homoserine O-acetyltransferase FUB5, as well as enzymes of the primary metabolism. The polyketide synthase (PKS) FUB1 generates the triketide trans-2-hexenal which is presumptively released by the hydrolase FUB4 and linked to the NRPS-bound amino acid precursor by NAD(P)-dependent dehydrogenase FUB6. FUB1, FUB4, and the non-canonical NRPS Fub8 may form an enzyme complex. Further processing of the NRPS-bound intermediate might be carried out by FUB6 and the sulfhydrylase FUB7, enabling a spontaneous electrocyclization to close the carbon backbone of fusaric acid. Dihydrofusaric acid is likely to be released via reduction by the thioester reductase (TR) domain of FUB8 whereupon the final oxidation to fusaric acid may (also) be performed by the FMN-dependent dehydrogenase FUB9. This chain is Reducing polyketide synthase FUB1, found in Gibberella fujikuroi (strain CBS 195.34 / IMI 58289 / NRRL A-6831) (Bakanae and foot rot disease fungus).